A 466-amino-acid polypeptide reads, in one-letter code: Trigger factor (466 aa).

In terms of domain architecture, PPIase FKBP-type spans 162-243 (GDVVSIDLSA…VRSVKERELP (82 aa)). A disordered region spans residues 428–466 (GNTIDTSEFFGKRVSAGEAEEAEPADEGAARAASDEATT). Over residues 457–466 (ARAASDEATT) the composition is skewed to low complexity.

The protein belongs to the FKBP-type PPIase family. Tig subfamily.

It localises to the cytoplasm. It carries out the reaction [protein]-peptidylproline (omega=180) = [protein]-peptidylproline (omega=0). In terms of biological role, involved in protein export. Acts as a chaperone by maintaining the newly synthesized protein in an open conformation. Functions as a peptidyl-prolyl cis-trans isomerase. The protein is Trigger factor of Mycobacterium bovis (strain BCG / Tokyo 172 / ATCC 35737 / TMC 1019).